A 383-amino-acid polypeptide reads, in one-letter code: 3-dehydroquinate synthase (383 aa).

Residues 81–86 (EGEVSK), 115–119 (GVVGD), 139–140 (TS), lysine 152, and lysine 161 contribute to the NAD(+) site. 3 residues coordinate Zn(2+): glutamate 194, histidine 256, and histidine 274.

It belongs to the sugar phosphate cyclases superfamily. Dehydroquinate synthase family. Co(2+) serves as cofactor. Requires Zn(2+) as cofactor. It depends on NAD(+) as a cofactor.

The protein localises to the cytoplasm. It carries out the reaction 7-phospho-2-dehydro-3-deoxy-D-arabino-heptonate = 3-dehydroquinate + phosphate. It participates in metabolic intermediate biosynthesis; chorismate biosynthesis; chorismate from D-erythrose 4-phosphate and phosphoenolpyruvate: step 2/7. In terms of biological role, catalyzes the conversion of 3-deoxy-D-arabino-heptulosonate 7-phosphate (DAHP) to dehydroquinate (DHQ). This Nitrobacter winogradskyi (strain ATCC 25391 / DSM 10237 / CIP 104748 / NCIMB 11846 / Nb-255) protein is 3-dehydroquinate synthase.